Reading from the N-terminus, the 876-residue chain is Leucine--tRNA ligase (876 aa).

Residues 1–20 form a disordered region; it reads MATERYNPRDAEPRWQQKWN. Residues 43-53 carry the 'HIGH' region motif; it reads PYPSGRIHMGH. The 'KMSKS' region signature appears at 632 to 636; sequence KMSKS. Lys635 contacts ATP.

The protein belongs to the class-I aminoacyl-tRNA synthetase family.

Its subcellular location is the cytoplasm. The catalysed reaction is tRNA(Leu) + L-leucine + ATP = L-leucyl-tRNA(Leu) + AMP + diphosphate. The polypeptide is Leucine--tRNA ligase (Rhizobium leguminosarum bv. trifolii (strain WSM2304)).